We begin with the raw amino-acid sequence, 349 residues long: Micronemal protein 6 (349 aa).

Residues 1 to 23 (MRLFRCCAAAVVAAESLLWLKNG) form the signal peptide. 3 consecutive EGF-like domains span residues 36–80 (IADN…VTCM), 96–134 (TPAA…SLDG), and 147–192 (GCEE…ITCK). 9 disulfides stabilise this stretch: C40/C53, C45/C62, C64/C79, C100/C113, C105/C122, C124/C140, C148/C162, C153/C173, and C175/C191. Positions 194-291 (VPPHYRKPPF…EEGSGHAGAI (98 aa)) are disordered. The segment at 204-283 (EFGKGGHPVD…SEEQGKEREE (80 aa)) is acidic domain. 2 stretches are compositionally biased toward basic and acidic residues: residues 210-247 (HPVD…RTPL) and 276-285 (EQGKEREEGS). Residues 290–310 (AIAGGVIGGLLLLSAAGAGVA) traverse the membrane as a helical segment.

In terms of assembly, interacts directly with MIC1. Part of the MIC6-MIC1-MIC4 complex. Post-translationally, subject to proteolytic processing involving both the N-terminus and the C-terminus. The first EGF-like domain (EGF-like domain 1) is removed by proteolytic cleavage by ASP3 and is not present in the mature protein. Released as soluble 35 kDa protein after proteolytic processing at the C-terminus.

The protein localises to the cytoplasmic vesicle. It localises to the secretory vesicle. It is found in the microneme membrane. Its subcellular location is the secreted. In terms of biological role, escorter protein required for import of MIC1 and MIC4 adhesins into the microneme. This is Micronemal protein 6 from Toxoplasma gondii.